The sequence spans 477 residues: MNKKSLWKLILILAIPCIIGFMPAPAGLSELAWVLFGIYLAAIVGLVIKPFPEPVVLLIAVAASMVVVGNLSDGAFKTTAVLSGYSSGTTWLVFSAFTLSAAFVTTGLGKRIAYLLIGKIGNTTLGLGYVTVFLDLVLAPATPSNTARAGGIVLPIINSVAVALGSEPEKSPRRVGHYLMMSIYMVTKTTSYMFFTAMAGNILALKMINDILHLQISWGGWALAAGLPGIIMLLVTPLVIYTMYPPEIKKVDNKTIAKAGLAELGPMKIREKMLLGVFVLALLGWIFSKSLGVDESTVAIVVMATMLLLGIVTWEDVVKNKGGWNTLIWYGGIIGLSSLLSKVKFFEWLAEVFKNNLAFDGHGNVAFFVIIFLSIIVRYFFASGSAYIVAMLPVFAMLANVSGAPLMLTALALLFSNSYGGMVTHYGGAAGPVIFGVGYNDIKSWWLVGAVLTILTFLVHITLGVWWWNMLIGWNML.

Topologically, residues 1–5 (MNKKS) are cytoplasmic. Residues 6-26 (LWKLILILAIPCIIGFMPAPA) form a helical membrane-spanning segment. Residue glycine 27 is a topological domain, periplasmic. A helical membrane pass occupies residues 28–48 (LSELAWVLFGIYLAAIVGLVI). Topologically, residues 49-50 (KP) are cytoplasmic. The helical transmembrane segment at 51–71 (FPEPVVLLIAVAASMVVVGNL) threads the bilayer. The Periplasmic segment spans residues 72-87 (SDGAFKTTAVLSGYSS). A helical transmembrane segment spans residues 88–108 (GTTWLVFSAFTLSAAFVTTGL). At 109–148 (GKRIAYLLIGKIGNTTLGLGYVTVFLDLVLAPATPSNTAR) the chain is on the cytoplasmic side. The helical transmembrane segment at 149-169 (AGGIVLPIINSVAVALGSEPE) threads the bilayer. The Periplasmic segment spans residues 170–219 (KSPRRVGHYLMMSIYMVTKTTSYMFFTAMAGNILALKMINDILHLQISWG). Residues 220-240 (GWALAAGLPGIIMLLVTPLVI) traverse the membrane as a helical segment. Topologically, residues 241-272 (YTMYPPEIKKVDNKTIAKAGLAELGPMKIREK) are cytoplasmic. A helical transmembrane segment spans residues 273–293 (MLLGVFVLALLGWIFSKSLGV). The Periplasmic segment spans residues 294-297 (DEST). Residues 298 to 318 (VAIVVMATMLLLGIVTWEDVV) form a helical membrane-spanning segment. The Cytoplasmic portion of the chain corresponds to 319–356 (KNKGGWNTLIWYGGIIGLSSLLSKVKFFEWLAEVFKNN). The chain crosses the membrane as a helical span at residues 357–377 (LAFDGHGNVAFFVIIFLSIIV). Residue arginine 378 is a topological domain, periplasmic. Residues 379–399 (YFFASGSAYIVAMLPVFAMLA) form a helical membrane-spanning segment. Residues 400 to 445 (NVSGAPLMLTALALLFSNSYGGMVTHYGGAAGPVIFGVGYNDIKSW) are Cytoplasmic-facing. Residues 446 to 466 (WLVGAVLTILTFLVHITLGVW) form a helical membrane-spanning segment. Topologically, residues 467-477 (WWNMLIGWNML) are periplasmic.

Belongs to the SLC13A/DASS transporter (TC 2.A.47) family. DIT1 subfamily.

It is found in the cell inner membrane. The chain is Inner membrane protein YbhI (ybhI) from Escherichia coli (strain K12).